We begin with the raw amino-acid sequence, 421 residues long: Gamma-glutamyl phosphate reductase (421 aa).

The protein belongs to the gamma-glutamyl phosphate reductase family.

The protein localises to the cytoplasm. The enzyme catalyses L-glutamate 5-semialdehyde + phosphate + NADP(+) = L-glutamyl 5-phosphate + NADPH + H(+). Its pathway is amino-acid biosynthesis; L-proline biosynthesis; L-glutamate 5-semialdehyde from L-glutamate: step 2/2. Functionally, catalyzes the NADPH-dependent reduction of L-glutamate 5-phosphate into L-glutamate 5-semialdehyde and phosphate. The product spontaneously undergoes cyclization to form 1-pyrroline-5-carboxylate. The chain is Gamma-glutamyl phosphate reductase from Ruegeria sp. (strain TM1040) (Silicibacter sp.).